The following is a 221-amino-acid chain: Holliday junction branch migration complex subunit RuvA (221 aa).

The segment at 1-61 (MQIYQFGKIV…DYTKITYGFA (61 aa)) is domain I. Residues 62–139 (SFRERILFED…RFNENHKNQT (78 aa)) are domain II. The tract at residues 133-155 (ENHKNQTEETNQDSQEKELEKKD) is disordered. A flexible linker region spans residues 140–166 (EETNQDSQEKELEKKDDLADITIQKSN). Positions 146 to 155 (SQEKELEKKD) are enriched in basic and acidic residues. The interval 167–221 (LEDKTAANLEDTLKMLGFKPRQIDYALTKVEPNENFENLIENAIKIISNAREFRN) is domain III.

This sequence belongs to the RuvA family. Homotetramer. Forms an RuvA(8)-RuvB(12)-Holliday junction (HJ) complex. HJ DNA is sandwiched between 2 RuvA tetramers; dsDNA enters through RuvA and exits via RuvB. An RuvB hexamer assembles on each DNA strand where it exits the tetramer. Each RuvB hexamer is contacted by two RuvA subunits (via domain III) on 2 adjacent RuvB subunits; this complex drives branch migration. In the full resolvosome a probable DNA-RuvA(4)-RuvB(12)-RuvC(2) complex forms which resolves the HJ.

The protein localises to the cytoplasm. Its function is as follows. The RuvA-RuvB-RuvC complex processes Holliday junction (HJ) DNA during genetic recombination and DNA repair, while the RuvA-RuvB complex plays an important role in the rescue of blocked DNA replication forks via replication fork reversal (RFR). RuvA specifically binds to HJ cruciform DNA, conferring on it an open structure. The RuvB hexamer acts as an ATP-dependent pump, pulling dsDNA into and through the RuvAB complex. HJ branch migration allows RuvC to scan DNA until it finds its consensus sequence, where it cleaves and resolves the cruciform DNA. This chain is Holliday junction branch migration complex subunit RuvA, found in Mesomycoplasma hyopneumoniae (strain J / ATCC 25934 / NCTC 10110) (Mycoplasma hyopneumoniae).